Reading from the N-terminus, the 288-residue chain is Sulfur carrier protein FdhD (288 aa).

Catalysis depends on cysteine 122, which acts as the Cysteine persulfide intermediate. 268 to 273 (FVRGER) is a binding site for Mo-bis(molybdopterin guanine dinucleotide).

This sequence belongs to the FdhD family.

The protein localises to the cytoplasm. Its function is as follows. Required for formate dehydrogenase (FDH) activity. Acts as a sulfur carrier protein that transfers sulfur from IscS to the molybdenum cofactor prior to its insertion into FDH. This Anaeromyxobacter sp. (strain K) protein is Sulfur carrier protein FdhD.